Here is a 143-residue protein sequence, read N- to C-terminus: Large ribosomal subunit protein uL11 (143 aa).

This sequence belongs to the universal ribosomal protein uL11 family. In terms of assembly, part of the ribosomal stalk of the 50S ribosomal subunit. Interacts with L10 and the large rRNA to form the base of the stalk. L10 forms an elongated spine to which L12 dimers bind in a sequential fashion forming a multimeric L10(L12)X complex. In terms of processing, one or more lysine residues are methylated.

Functionally, forms part of the ribosomal stalk which helps the ribosome interact with GTP-bound translation factors. This chain is Large ribosomal subunit protein uL11, found in Burkholderia ambifaria (strain MC40-6).